The primary structure comprises 348 residues: Phenylalanine--tRNA ligase alpha subunit (348 aa).

Glutamate 259 serves as a coordination point for Mg(2+).

This sequence belongs to the class-II aminoacyl-tRNA synthetase family. Phe-tRNA synthetase alpha subunit type 1 subfamily. In terms of assembly, tetramer of two alpha and two beta subunits. Requires Mg(2+) as cofactor.

The protein localises to the cytoplasm. The enzyme catalyses tRNA(Phe) + L-phenylalanine + ATP = L-phenylalanyl-tRNA(Phe) + AMP + diphosphate + H(+). The polypeptide is Phenylalanine--tRNA ligase alpha subunit (Levilactobacillus brevis (strain ATCC 367 / BCRC 12310 / CIP 105137 / JCM 1170 / LMG 11437 / NCIMB 947 / NCTC 947) (Lactobacillus brevis)).